Reading from the N-terminus, the 763-residue chain is ATP-dependent RNA helicase SUPV3L1, mitochondrial (763 aa).

The N-terminal 65 residues, M1 to P65, are a transit peptide targeting the mitochondrion. The disordered stretch occupies residues R39–L58. A Helicase ATP-binding domain is found at E192–F332. G205–T212 lines the ATP pocket. The Helicase C-terminal domain occupies H354–A519. Disordered stretches follow at residues D679–L721 and E742–K763. Residues S680–E697 are compositionally biased toward polar residues.

It belongs to the helicase family. The cofactor is Mg(2+). Requires Mn(2+) as cofactor.

Its subcellular location is the nucleus. It is found in the mitochondrion matrix. The protein resides in the mitochondrion nucleoid. The catalysed reaction is ATP + H2O = ADP + phosphate + H(+). In terms of biological role, major helicase player in mitochondrial RNA metabolism. Component of the mitochondrial degradosome (mtEXO) complex, that degrades 3' overhang double-stranded RNA with a 3'-to-5' directionality in an ATP-dependent manner. ATPase and ATP-dependent multisubstrate helicase, able to unwind double-stranded (ds) DNA and RNA, and RNA/DNA heteroduplexes in the 5'-to-3' direction. Plays a role in the RNA surveillance system in mitochondria; regulates the stability of mature mRNAs, the removal of aberrantly formed mRNAs and the rapid degradation of non coding processing intermediates. Also implicated in recombination and chromatin maintenance pathways. May protect cells from apoptosis. Associates with mitochondrial DNA. This Danio rerio (Zebrafish) protein is ATP-dependent RNA helicase SUPV3L1, mitochondrial (supv3l1).